The chain runs to 157 residues: Transcription elongation factor GreA (157 aa).

Residues 13-75 (RARLEAELEE…EIKSILARAQ (63 aa)) are a coiled coil. Residues 113 to 142 (EAKPSEGKISNESPIGSALLGKRPRQKVTV) are disordered.

This sequence belongs to the GreA/GreB family.

Necessary for efficient RNA polymerase transcription elongation past template-encoded arresting sites. The arresting sites in DNA have the property of trapping a certain fraction of elongating RNA polymerases that pass through, resulting in locked ternary complexes. Cleavage of the nascent transcript by cleavage factors such as GreA or GreB allows the resumption of elongation from the new 3'terminus. GreA releases sequences of 2 to 3 nucleotides. This is Transcription elongation factor GreA from Roseiflexus sp. (strain RS-1).